The primary structure comprises 552 residues: Hyaluronan synthase 2 (552 aa).

The Cytoplasmic segment spans residues 1–11; the sequence is MHCERFLCILR. A helical transmembrane segment spans residues 12 to 32; sequence IIGTTLFGVSLLLGITAAYIV. Topologically, residues 33 to 45 are extracellular; it reads GYQFIQTDNYYFS. A helical membrane pass occupies residues 46 to 66; sequence FGLYGAFLASHLIIQSLFAFL. Residues 67 to 374 are Cytoplasmic-facing; sequence EHRKMKKSLE…NAMWFHKHHL (308 aa). The residue at position 110 (Thr110) is a Phosphothreonine. Lys190 is covalently cross-linked (Glycyl lysine isopeptide (Lys-Gly) (interchain with G-Cter in ubiquitin)). O-linked (GlcNAc) serine glycosylation is present at Ser221. Thr328 is modified (phosphothreonine). Residues 375–395 form a helical membrane-spanning segment; sequence WMTYEAVITGFFPFFLIATVI. The Extracellular segment spans residues 396-402; sequence QLFYRGK. A helical transmembrane segment spans residues 403–423; that stretch reads IWNTLLFLLTVQLVGLIKSSF. Over 424-429 the chain is Cytoplasmic; sequence ASCLRG. Residues 430 to 450 form a helical membrane-spanning segment; that stretch reads NIVMVFMSLYSVLYMSSLLPA. Topologically, residues 451 to 475 are extracellular; it reads KMFAIATINKAGWGTSGRKTIVVNF. A helical membrane pass occupies residues 476-496; sequence IGLIPVSVWFTILLGGVIFTI. Residues 497 to 510 are Cytoplasmic-facing; that stretch reads YKESKKPFSESKQT. A helical transmembrane segment spans residues 511 to 531; the sequence is VLIVGTLLYACYWVMLLTLYV. The Extracellular segment spans residues 532-552; it reads VLINKCGRRKKGQQYDMVLDV.

This sequence belongs to the NodC/HAS family. As to quaternary structure, homodimer; dimerization promotes enzymatic activity. Forms heterodimer with HAS3. Forms heterodimer with HAS1. Mg(2+) serves as cofactor. Phosphorylation at Thr-328 is essential for hyaluronan synthase activity. In terms of processing, O-GlcNAcylation at Ser-221 increases the stability of HAS2 and plasma membrane localization. Post-translationally, ubiquitination at Lys-190; this ubiquitination is essential for hyaluronan synthase activity and homo- or hetero-oligomerization. Can also be poly-ubiquitinated. Deubiquitinated by USP17 and USP4. USP17 efficiently removes 'Lys-63'- and 'Lys-48'-linked polyubiquitin chains, whereas USP4 preferentially removes monoubiquitination and, partially, both 'Lys-63'- and 'Lys-48'-linked polyubiquitin chain. In terms of tissue distribution, expressed in corneal endothelial cells.

The protein resides in the cell membrane. It localises to the endoplasmic reticulum membrane. Its subcellular location is the vesicle. The protein localises to the golgi apparatus membrane. It is found in the lysosome. It catalyses the reaction [hyaluronan](n) + UDP-N-acetyl-alpha-D-glucosamine = N-acetyl-beta-D-glucosaminyl-(1-&gt;4)-[hyaluronan](n) + UDP + H(+). The catalysed reaction is N-acetyl-beta-D-glucosaminyl-(1-&gt;4)-[hyaluronan](n) + UDP-alpha-D-glucuronate = [hyaluronan](n+1) + UDP + H(+). It participates in glycan biosynthesis; hyaluronan biosynthesis. Functionally, catalyzes the addition of GlcNAc or GlcUA monosaccharides to the nascent hyaluronan polymer. Therefore, it is essential to hyaluronan synthesis a major component of most extracellular matrices that has a structural role in tissues architectures and regulates cell adhesion, migration and differentiation. This is one of three isoenzymes responsible for cellular hyaluronan synthesis and it is particularly responsible for the synthesis of high molecular mass hyaluronan. This is Hyaluronan synthase 2 (HAS2) from Bos taurus (Bovine).